The chain runs to 537 residues: Fucosyltransferase 6 (537 aa).

The Cytoplasmic segment spans residues 1–20 (MYHIFQISSEVFRAFGLKMK). A helical; Signal-anchor for type II membrane protein transmembrane segment spans residues 21 to 41 (ILLTLVFSGLLIWSVVLVSFS). The Lumenal portion of the chain corresponds to 42–537 (NDFNNQLLVA…NDGLKLFDEL (496 aa)). N-linked (GlcNAc...) asparagine glycosylation is found at asparagine 54, asparagine 231, and asparagine 378.

It belongs to the glycosyltransferase 37 family. Expressed in roots and flowers.

Its subcellular location is the golgi apparatus. It localises to the golgi stack membrane. It functions in the pathway protein modification; protein glycosylation. May be involved in cell wall biosynthesis. May act as a fucosyltransferase. This Arabidopsis thaliana (Mouse-ear cress) protein is Fucosyltransferase 6 (FUT6).